The sequence spans 587 residues: GTPase-activating protein skywalker (587 aa).

Residues K75 and R79 each contribute to the a 1,2-diacyl-sn-glycero-3-phospho-(1D-myo-inositol) site. Residues 84-275 form the Rab-GAP TBC domain; the sequence is PINSPIRAQL…RIMDCYFHEG (192 aa). A 1,2-diacyl-sn-glycero-3-phospho-(1D-myo-inositol) is bound by residues K277, R281, and 335–339; that span reads RGLST. The 178-residue stretch at 408 to 585 folds into the TLDc domain; the sequence is TWTDRQFLFT…IRVLEVYGFV (178 aa).

In terms of tissue distribution, detected in the larval ventral nerve cord and neuromuscular junction boutons (at protein level).

It localises to the cytoplasmic vesicle. Its subcellular location is the secretory vesicle. The protein resides in the synaptic vesicle membrane. It is found in the endosome membrane. Its function is as follows. GTPase-activating protein (GAP) for Rab35 which regulates synaptic vesicle (SV) protein recycling and turnover at the neuromuscular junction boutons and possibly ventral nerve cord via endosomal trafficking. Inhibits Rab35-mediated endosomal sorting which traffics old or dysfunctional SV proteins through a degradative endolysosomal route that involves the ESCRT pathway and the HOPS complex members dor, vps39 and rab7. This function is essential for preventing excessive degradation and turnover of vesicles from the readily releasable pool which leads to increased neurotransmission and eventually neurodegeneration. Preferentially binds phosphoinositides phosphorylated at the D5 position of the inositol ring, such as phosphatidylinositol 4,5-bisphosphate (PIP2) and phosphatidylinositol 3,4,5-trisphosphate (PIP3). Binding to phosphoinositides and thus membrane-association, is required for its function in regulating the turnover of synaptic-vesicle proteins. It is therefore likely that it is recruited to vesicle membranes with high phosphoinositide content and thereby selectively prevents endolysosomal degradation of these vesicles. This chain is GTPase-activating protein skywalker, found in Drosophila melanogaster (Fruit fly).